A 398-amino-acid chain; its full sequence is Acetylornithine aminotransferase (398 aa).

Phe-129 lines the pyridoxal 5'-phosphate pocket. Arg-132 contributes to the N(2)-acetyl-L-ornithine binding site. 214-217 (DEVQ) provides a ligand contact to pyridoxal 5'-phosphate. Lys-243 is subject to N6-(pyridoxal phosphate)lysine. Position 271 (Ser-271) interacts with N(2)-acetyl-L-ornithine. Thr-272 is a pyridoxal 5'-phosphate binding site.

Belongs to the class-III pyridoxal-phosphate-dependent aminotransferase family. ArgD subfamily. Homodimer. The cofactor is pyridoxal 5'-phosphate.

Its subcellular location is the cytoplasm. It catalyses the reaction N(2)-acetyl-L-ornithine + 2-oxoglutarate = N-acetyl-L-glutamate 5-semialdehyde + L-glutamate. It participates in amino-acid biosynthesis; L-arginine biosynthesis; N(2)-acetyl-L-ornithine from L-glutamate: step 4/4. The polypeptide is Acetylornithine aminotransferase (Neisseria meningitidis serogroup B (strain ATCC BAA-335 / MC58)).